The chain runs to 367 residues: Glutamate 5-kinase (367 aa).

Position 10 (K10) interacts with ATP. Positions 50, 137, and 149 each coordinate substrate. Residues 169 to 170 (TD) and 211 to 217 (TGGMSTK) each bind ATP. The PUA domain occupies 275–353 (AGIITIDAGA…QDIEQVLGYE (79 aa)).

This sequence belongs to the glutamate 5-kinase family.

Its subcellular location is the cytoplasm. The enzyme catalyses L-glutamate + ATP = L-glutamyl 5-phosphate + ADP. The protein operates within amino-acid biosynthesis; L-proline biosynthesis; L-glutamate 5-semialdehyde from L-glutamate: step 1/2. In terms of biological role, catalyzes the transfer of a phosphate group to glutamate to form L-glutamate 5-phosphate. This is Glutamate 5-kinase from Pasteurella multocida (strain Pm70).